A 2789-amino-acid polypeptide reads, in one-letter code: MALGGALALALALALAVLGPLSLRVLAGDCKGQRQVLREAPGFVTDGAGNYSVNGNCEWLIEAPSPQHRILLDFLFLDTECTYDYLFVYDGDSPQGPLLASLSGSTRPPPIEASSGKMLLHLFSDANYNLLGFNASFRFSLCPGGCQNHGQCKSPGVCVCEPGWGGPDCGLQECSAYCGSHGTCASTLGPCRCEPGFLGRACDLHLWENQGAGWWHSVSAGDPAFSARIGAAGAFLSPPGLLAVFGGQDLNKALGDLVLYNFSTNTWESWDLTPAPAARHSHVAVAWAGLLVLMGGELANGLLTNDVWAFSPLGGGHWELLAPPASSSSGPPGLAGHAAALVDDIWLYVSGGRTQHDLFSSGLFRFRLDHTSRGYWEQVIPAGGRPPAATGHSMVFHAPSRTLLVHGGHRPSTARFSVRVNSTELFHVERRVWTTLKGRDGLQGPRERAFHTASVLGNYMVVYGGNVHTHYQEEKCYEDGIFFYHLGCHQWVSGAELAPPGTPEGRAAPPSGRYSHVAAVLGGSVLLVAGGYSGRPRGDLMAYKVPPFVFQAPALDYHLDYCSMYTDHSVCSRDPECSWCQGACQAAPPPGTPSGACPAASCLGLGRLLSDCQACLAFSSPTAPPRGPGALGWCVHNESCLPRPEQARCRGEQISGTVGWWGPAPVFVTSLEACVTQSFLPGLHLLTFQQPPNASQPDKVSIVRSTTITLTPSPETDVSLVYRGFIHPLLPGGPGGPGAEDVAVWARAQRLHVLARMARGPDTENMEEVGRWVAQQEKETRRLQRPGSDRLFPLPGRGNKYAVEIRGQLNGSAGPGHSELTLLWDRTGVPGGSEISFFFLEPYRSSACTSYSSCLGCLADQGCGWCLNSATCHLRQGRAHCEDDGSGESLLVLVPALCPLCEEHRDCHACTQDPFCEWHQSTNRKGDAACSRRGRGRGALKNPEECPPLCSQRLTCEDCLANSSQCAWCQSTHTCFLFAAYLARYPHGGCRGWDDSVHSEPRCRSCGGFLTCHECLQSHECGWCGNEDNPTLGRCLQGDFSGPLGGGNCSLWVGEGLGLPVALPARWAYARCPDVDECRLGLARCHPRATCLNTPLSYECHCQRGYQGDGITHCNRTCLEDCGHGVCSGPPDFTCVCDLGWTSDLPPPTPAPGPPAPRCSRDCGCSFHSHCRRRGPGYCDECQDWTWGEHCERCRPGSFGNATGSGGCRPCQCNGHGDPRRGHCDNLTGLCFCQDHTEGAHCQICSPGYYGDPRAGGSCFRECGGRALLTNVSSVALGSRRFGGLLPPGGGAARAGPGLSYCVWVVSATEALQPCVPGTLCPPLTLTFSPDSSTPCTLSYVLAFDGFPRFLDTGVVQSDRSLIAAFCGQRRDRPLTVQALSGLLVLHWEANGSSSWGFNASVGSARCGSGGPGSCPVPQECVPQDGAAGAGLCRCPQGWAGPHCRMALCPENCNAHTGAGICNQSLGVCICAEGFGGPDCATKLDGGQLVWETLMDSRLSADTASRFLHRLGHTMVEGPDATLWMFGGLGLPQGLLGNLYRYSVSERRWTQMLAGAEDGGPGPSPRSFHAAAYVPAGRGAMYLLGGLTAGGVTRDFWVLNLTTLQWRQEKPPQNMELPAVAGHTLTARRGLSLLLVGGYSPENGFNQQLLEYQLATGTWVSGAQSGTPPTGLYGHSAVYHEATDSLYVFGGFRFHVELAAPSPELYSLHCPDRTWSLLAPSQGAKPRPRLFHASALLGDTMVVLGGRSDPDEFSSDVLLYQVNCNTWLLPALTRPAFVGSPMEESVAHAVAAVGSRLYISGGFGGVALGRLLALTLPPDPCRLLPSPEACNQSGACTWCHGACLSGDQAHRLGCGVPPCSPMPRSPEECRRLRTCSECLARHPRTLQPGDGEASIPRCKWCTNCPEGACIGRNGSCTSENDCRINQREVFWAGNCSEAACGAADCEQCTREGKCMWTRQFKRTGETRRILSVQPTYDWTCFSHSLLNVSPMPVESSPPLPCPTPCHLLPNCTSCLASKGADGGWQHCVWSSSLQQCLSPSYLPLRCMAGGCGRLLRGPESCSLGCAQATQCALCLRRPHCGWCAWGGQDGGGHCMEGGLSGPRDGLTCGRPGASWAFLSCPPEDECANGHHDCNETQNCHDQPHGYECSCKTGYTMDNVTGVCRPVCAQGCVNGSCVEPDHCRCHFGFVGRNCSTECRCNRHSECAGVGAQDHCLLCRNHTKGSHCEQCLPLFVGSALGGGTCRPCHAFCRGNSHVCVSRKELEMARKEPEKYSLDPEEIETWVAEGPSEDEAVCVNCQNNSYGDRCESCLHGYFLLDGKCTKCQCNGHADTCNEQDGTGCPCQNNTETGTCQGSSPSDRRDCYKYQCAKCRESFHGSPLGGQQCYRLISVEQECCLDPTSQTNCFHEPKRRALGPGRTVLFGVQPKFTNVDIRLTLDVTFGAVDLYVSTSYDTFVVRVAPDTGVHTVHIQPPPPPPPPPPPADGVPRVAADLGGLGTGSGSGSPVEPRVREVWPRGLITYVTVTEPSAVLVVRSVRDRLVITYPHEHHALKSSRFYLLLLGVGDPNGPGANGSADSQGLLFFRQDQAHIDLFVFFSVFFSCFFLFLSLCVLLWKAKQALDQRQEQRRHLQEMTKMASRPFAKVTVCFPPDPAGPAPAWKPAGLPPPAFRRSEPFLAPLLLTGAGGPWGPMGGGCCPPALPATTAGLRAGPITLEPTEDGMAGVATLLLQLPGGPHAPNGACLGSALVTLRHRLHEYCGGSGGAGGSGHGGGGGRKGLLSQDNLTSMSL.

An N-terminal signal peptide occupies residues 1-27 (MALGGALALALALALAVLGPLSLRVLA). At 28-2591 (GDCKGQRQVL…FFRQDQAHID (2564 aa)) the chain is on the extracellular side. Intrachain disulfides connect C30-C57, C142-C152, C146-C158, C174-C184, C178-C191, and C193-C202. Positions 30 to 140 (CKGQRQVLRE…LGFNASFRFS (111 aa)) constitute a CUB 1 domain. Residue N50 is glycosylated (N-linked (GlcNAc...) asparagine). 2 consecutive EGF-like domains span residues 138-168 (RFSL…GGPD) and 170-203 (GLQE…RACD). Kelch repeat units lie at residues 241–287 (LLAV…AVAW), 290–338 (LLVL…AGHA), 346–399 (WLYV…FHAP), 402–453 (TLLV…FHTA), 459–511 (YMVV…APPS), and 525–575 (VLLV…SRDP). PSI domains are found at residues 561-613 (YCSM…SDCQ), 847-899 (ACTS…ALCP), and 900-947 (LCEE…EECP). A glycan (N-linked (GlcNAc...) asparagine) is linked at N1048. In terms of domain architecture, EGF-like 3; calcium-binding spans 1074–1115 (DVDECRLGLARCHPRATCLNTPLSYECHCQRGYQGDGITHCN). Cystine bridges form between C1078–C1091, C1085–C1100, C1102–C1114, C1163–C1171, C1165–C1179, C1182–C1191, C1194–C1208, C1211–C1224, C1213–C1231, C1233–C1242, C1245–C1259, C1263–C1302, C1336–C1367, C1407–C1421, C1415–C1433, and C1435–C1444. Laminin EGF-like domains lie at 1163-1210 (CGCS…GCRP) and 1211-1261 (CQCN…SCFR). A glycan (N-linked (GlcNAc...) asparagine) is linked at N1226. A CUB 2 domain is found at 1263–1405 (CGGRALLTNV…WGFNASVGSA (143 aa)). A glycan (N-linked (GlcNAc...) asparagine) is linked at N1271. Residue T1353 is modified to Phosphothreonine. The region spanning 1403–1445 (GSARCGSGGPGSCPVPQECVPQDGAAGAGLCRCPQGWAGPHCR) is the EGF-like 4 domain. Kelch repeat units lie at residues 1522 to 1570 (TLWM…SFHA), 1580 to 1629 (AMYL…TARR), 1632 to 1679 (SLLL…SAVY), 1685 to 1735 (SLYV…HASA), 1740 to 1787 (TMVV…ESVA), and 1796 to 1841 (RLYI…WCHG). PSI domains follow at residues 1820–1860 (PCRL…PPCS), 1868–1923 (ECRR…NDCR), 2004–2062 (PCHL…ESCS), and 2064–2121 (GCAQ…LSCP). N-linked (GlcNAc...) asparagine glycosylation occurs at N2010. One can recognise an EGF-like 5 domain in the interval 2122 to 2160 (PEDECANGHHDCNETQNCHDQPHGYECSCKTGYTMDNVT). Disulfide bonds link C2126-C2139 and C2133-C2148. N-linked (GlcNAc...) asparagine glycans are attached at residues N2158 and N2173. 8 cysteine pairs are disulfide-bonded: C2197–C2205, C2199–C2214, C2217–C2226, C2229–C2243, C2324–C2333, C2326–C2341, C2343–C2368, and C2371–C2385. Laminin EGF-like domains are found at residues 2197 to 2245 (CRCN…TCRP) and 2324 to 2387 (CQCN…QCYR). Residues 2468-2508 (VHIQPPPPPPPPPPPADGVPRVAADLGGLGTGSGSGSPVEP) form a disordered region. The segment covering 2471–2484 (QPPPPPPPPPPPAD) has biased composition (pro residues). Residues 2592–2612 (LFVFFSVFFSCFFLFLSLCVL) traverse the membrane as a helical segment. The Cytoplasmic portion of the chain corresponds to 2613–2789 (LWKAKQALDQ…SQDNLTSMSL (177 aa)). Over residues 2762–2776 (GGAGGSGHGGGGGRK) the composition is skewed to gly residues. Residues 2762-2789 (GGAGGSGHGGGGGRKGLLSQDNLTSMSL) form a disordered region. A compositionally biased stretch (polar residues) spans 2780–2789 (SQDNLTSMSL).

In terms of tissue distribution, highest expression in brain, testis and kidney.

The protein resides in the membrane. In terms of biological role, acts as a negative regulator of hedgehog signaling. The protein is Multiple epidermal growth factor-like domains protein 8 (Megf8) of Mus musculus (Mouse).